We begin with the raw amino-acid sequence, 744 residues long: MYLQLLKPTLLRCSTRPSSSGAYTRSPIDQKWAAMAKKAMKGREADTLTWNTPEGIPIKPLYLRSDRDCDAQRSVELPGQFPFTRGPYPTMYTQRPWTIRQYAGFSTVEESNKFYKENIKAGQQGLSVAFDLATHRGYDSDNPRVFGDVGMAGVAVDSVEDMRQLFDGINLEKMSVSMTMNGAVVPVLAMYVVAAEEAGVSRKLLAGTIQNDILKEFMVRNTYIYPPEPSMRIIGDIFAYTSREMPKFNSISISGYHMQEAGADAVLEMAFTIADGIQYCETGLNAGLTIDAFAPRLSFFWGISMNFYMEIAKMRAARRLWANLIKERFSPKSDKSMMLRTHSQTSGWSLTEQDPYNNIIRTTIEAMASVFGGTQSLHTNSFDEALGLPTKFSARIARNTQIIIQEESGICNVADPWGGSYMMESLTDEIYEKALAVIKEIDELGGMAKAVASGMTKLKIEEAAAKKQARIDAGKDVIVGVNKYRLDHEQQVEVLKIDNAKVREEQCAKLNHIRATRDAEKAQKALDAITEGARGNGNLMELAIEAARARCTVGEISDAMEKVFNRHAAVNRLVSGAYKSEFGETSEMSQVLERVKSFADRDGRQPRIMVAKMGQDGHDRGAKVIATGFADLGFDVDVGPLFQTPLEAAQQAVDADVHVIGASSLAAGHLTLIPQLIGELKKLGRPDILVVAGGVIPPQDYKELYDAGVALVFGPGTRLPACANQILEKLEANLPEAPGKAASR.

Positions 605-737 constitute a B12-binding domain; that stretch reads QPRIMVAKMG…EKLEANLPEA (133 aa). Position 618 (histidine 618) interacts with adenosylcob(III)alamin.

The protein belongs to the methylmalonyl-CoA mutase family. Homodimer. Requires adenosylcob(III)alamin as cofactor.

The protein localises to the mitochondrion matrix. It carries out the reaction (R)-methylmalonyl-CoA = succinyl-CoA. Involved, in man, in the degradation of several amino acids, odd-chain fatty acids and cholesterol via propionyl-CoA to the tricarboxylic acid cycle. MCM has different functions in other species. The chain is Probable methylmalonyl-CoA mutase, mitochondrial (mmcm-1) from Caenorhabditis elegans.